Here is a 57-residue protein sequence, read N- to C-terminus: DNA-directed RNA polymerase subunit Rpo6 (57 aa).

The protein belongs to the archaeal Rpo6/eukaryotic RPB6 RNA polymerase subunit family. In terms of assembly, part of the RNA polymerase complex.

It is found in the cytoplasm. It carries out the reaction RNA(n) + a ribonucleoside 5'-triphosphate = RNA(n+1) + diphosphate. DNA-dependent RNA polymerase (RNAP) catalyzes the transcription of DNA into RNA using the four ribonucleoside triphosphates as substrates. In Thermococcus gammatolerans (strain DSM 15229 / JCM 11827 / EJ3), this protein is DNA-directed RNA polymerase subunit Rpo6.